A 121-amino-acid polypeptide reads, in one-letter code: Holo-[acyl-carrier-protein] synthase (121 aa).

Residues D5 and E50 each coordinate Mg(2+).

This sequence belongs to the P-Pant transferase superfamily. AcpS family. Mg(2+) is required as a cofactor.

The protein resides in the cytoplasm. It carries out the reaction apo-[ACP] + CoA = holo-[ACP] + adenosine 3',5'-bisphosphate + H(+). Its function is as follows. Transfers the 4'-phosphopantetheine moiety from coenzyme A to a Ser of acyl-carrier-protein. The sequence is that of Holo-[acyl-carrier-protein] synthase from Sulfurimonas denitrificans (strain ATCC 33889 / DSM 1251) (Thiomicrospira denitrificans (strain ATCC 33889 / DSM 1251)).